The sequence spans 62 residues: UPF0434 protein Tola_2233 (62 aa).

It belongs to the UPF0434 family.

The polypeptide is UPF0434 protein Tola_2233 (Tolumonas auensis (strain DSM 9187 / NBRC 110442 / TA 4)).